The chain runs to 248 residues: DNA repair protein RecO (248 aa).

The protein belongs to the RecO family.

Functionally, involved in DNA repair and RecF pathway recombination. The chain is DNA repair protein RecO from Streptomyces avermitilis (strain ATCC 31267 / DSM 46492 / JCM 5070 / NBRC 14893 / NCIMB 12804 / NRRL 8165 / MA-4680).